The chain runs to 356 residues: Phosphate acyltransferase (356 aa).

This sequence belongs to the PlsX family. As to quaternary structure, homodimer. Probably interacts with PlsY.

The protein resides in the cytoplasm. It catalyses the reaction a fatty acyl-[ACP] + phosphate = an acyl phosphate + holo-[ACP]. It functions in the pathway lipid metabolism; phospholipid metabolism. Its function is as follows. Catalyzes the reversible formation of acyl-phosphate (acyl-PO(4)) from acyl-[acyl-carrier-protein] (acyl-ACP). This enzyme utilizes acyl-ACP as fatty acyl donor, but not acyl-CoA. The chain is Phosphate acyltransferase from Shigella sonnei (strain Ss046).